A 559-amino-acid chain; its full sequence is Hepatocyte nuclear factor 1-beta (559 aa).

The segment at 1-31 is dimerization; sequence MVSKLTSLQQELLSALLSSGVTKEVLVQALE. The 32-residue stretch at 1-32 folds into the HNF-p1 domain; it reads MVSKLTSLQQELLSALLSSGVTKEVLVQALEE. A phosphoserine mark is found at S49, S52, S75, and S80. Residues 93 to 188 enclose the POU-specific atypical domain; that stretch reads KELQALNTEE…ILRQFNQTVQ (96 aa). The homeobox; HNF1-type DNA-binding region spans 231–312; it reads MRRNRFKWGP…RRKEEEAFRQ (82 aa). A compositionally biased stretch (low complexity) spans 328–341; that stretch reads NTLLSHSSPHHQPS. The interval 328–371 is disordered; sequence NTLLSHSSPHHQPSTSPPNKLPGVRYNQQGNNEVTSSSTISHHG. Over residues 353–371 the composition is skewed to polar residues; sequence YNQQGNNEVTSSSTISHHG.

It belongs to the HNF1 homeobox family. In terms of assembly, binds DNA as a dimer. Can form homodimer or heterodimer with HNF1-alpha. Interacts (via HNF-p1 domain) with PCBD1; the interaction increases its transactivation activity.

It localises to the nucleus. Functionally, transcription factor that binds to the inverted palindrome 5'-GTTAATNATTAAC-3'. Binds to the FPC element in the cAMP regulatory unit of the PLAU gene. Transcriptional activity is increased by coactivator PCBD1. The polypeptide is Hepatocyte nuclear factor 1-beta (HNF1B) (Sus scrofa (Pig)).